Consider the following 114-residue polypeptide: Ribulose bisphosphate carboxylase small subunit 2 (114 aa).

The protein belongs to the RuBisCO small chain family. As to quaternary structure, heterohexadecamer of 8 large and 8 small subunits. Forms a CsoS2-CsoS1-RuBisCO complex.

The protein localises to the carboxysome. Its function is as follows. RuBisCO catalyzes two reactions: the carboxylation of D-ribulose 1,5-bisphosphate, the primary event in carbon dioxide fixation, as well as the oxidative fragmentation of the pentose substrate. Both reactions occur simultaneously and in competition at the same active site. Although the small subunit is not catalytic it is essential for maximal activity. Replacing the endogenous type I ccbLS genes in H.neapolitanus with this carboxysomally targeted enzyme reconstitutes RuBisCO with about 25% of normal activity; the active enzyme is targeted to carboxysomes. This Hydrogenovibrio crunogenus (strain DSM 25203 / XCL-2) (Thiomicrospira crunogena) protein is Ribulose bisphosphate carboxylase small subunit 2.